The following is a 351-amino-acid chain: Phospho-N-acetylmuramoyl-pentapeptide-transferase (351 aa).

10 helical membrane-spanning segments follow: residues 17–37 (MAYATIFAFLLSLIIGPHIIL), 62–82 (GIPTMGGILIFFCVFISLVFW), 85–105 (ILNVYFLIMLFVMLGFAFLGF), 124–144 (FKIYGQIIFSFISVGTLYYFG), 161–181 (IDLGLFYIPFGMFILISASNS), 190–210 (GLAIGLSIVITGALIIIAYLT), 230–250 (LVIFLGALLGGSFGFLWFNAY), 254–274 (IMMGDTGSLALGAILGMAALI), 279–299 (ILFSILAGVFIIETMSVIIQV), and 328–348 (QVVIRFWIIGLIFAIIALSTI).

Belongs to the glycosyltransferase 4 family. MraY subfamily. Requires Mg(2+) as cofactor.

It localises to the cell inner membrane. The catalysed reaction is UDP-N-acetyl-alpha-D-muramoyl-L-alanyl-gamma-D-glutamyl-meso-2,6-diaminopimeloyl-D-alanyl-D-alanine + di-trans,octa-cis-undecaprenyl phosphate = di-trans,octa-cis-undecaprenyl diphospho-N-acetyl-alpha-D-muramoyl-L-alanyl-D-glutamyl-meso-2,6-diaminopimeloyl-D-alanyl-D-alanine + UMP. The protein operates within cell wall biogenesis; peptidoglycan biosynthesis. Catalyzes the initial step of the lipid cycle reactions in the biosynthesis of the cell wall peptidoglycan: transfers peptidoglycan precursor phospho-MurNAc-pentapeptide from UDP-MurNAc-pentapeptide onto the lipid carrier undecaprenyl phosphate, yielding undecaprenyl-pyrophosphoryl-MurNAc-pentapeptide, known as lipid I. The protein is Phospho-N-acetylmuramoyl-pentapeptide-transferase of Borrelia garinii subsp. bavariensis (strain ATCC BAA-2496 / DSM 23469 / PBi) (Borreliella bavariensis).